We begin with the raw amino-acid sequence, 351 residues long: MSQARPATLRVAVLGAGSWGTALAAAASRRHPTVLWARDGAQAQAMAARHENTRYLPGVALPPALQVSADLAQALAHLAHDPAHALIILGVPVAGMTPLCTELAARLPALGLQAVPLVWTCKGFEEQTARLPHETVQAALGAMPGLAAGVLSGPSFAREVAQGLPVALTVASESSAVRDAVTTALHGAAVRIYASTDVVGVEVGGALKNVIAVACGICDGLALGTNARAALITRGLAEMARFGAALGAQQETFAGLTGLGDLVLTATGELSRNRRVGLEIGAGRKLADILASGMTAEGVRCARAARDRARALNIELPITEAVCAVLFEGLSPMTAVSALLAREARPESPTP.

Positions 18, 19, 38, and 122 each coordinate NADPH. Residues Lys122, Gly153, and Ser155 each contribute to the sn-glycerol 3-phosphate site. Ala157 is a binding site for NADPH. Sn-glycerol 3-phosphate contacts are provided by Lys208, Asp261, Ser271, Arg272, and Asn273. Lys208 acts as the Proton acceptor in catalysis. Arg272 lines the NADPH pocket. Residue Glu297 participates in NADPH binding.

The protein belongs to the NAD-dependent glycerol-3-phosphate dehydrogenase family.

The protein resides in the cytoplasm. The catalysed reaction is sn-glycerol 3-phosphate + NAD(+) = dihydroxyacetone phosphate + NADH + H(+). The enzyme catalyses sn-glycerol 3-phosphate + NADP(+) = dihydroxyacetone phosphate + NADPH + H(+). It functions in the pathway membrane lipid metabolism; glycerophospholipid metabolism. Its function is as follows. Catalyzes the reduction of the glycolytic intermediate dihydroxyacetone phosphate (DHAP) to sn-glycerol 3-phosphate (G3P), the key precursor for phospholipid synthesis. This chain is Glycerol-3-phosphate dehydrogenase [NAD(P)+], found in Bordetella bronchiseptica (strain ATCC BAA-588 / NCTC 13252 / RB50) (Alcaligenes bronchisepticus).